A 561-amino-acid polypeptide reads, in one-letter code: Shugoshin 1 (561 aa).

Positions 1–176 (MAKERCLKKS…DTLGVDFDSG (176 aa)) are necessary for interaction with PPP2CA and PPP2R1A. Residues 7 to 89 (LKKSFQDSLE…DIILQLRKEC (83 aa)) are a coiled coil. Serine 14 is modified (phosphoserine; by NEK2). Positions 192-200 (RSSLKKHCN) match the D-box 1 motif. Serine 256 is modified (phosphoserine). 2 disordered regions span residues 260 to 331 (IQPG…SVSS) and 348 to 441 (FRQK…HLSL). Residues 267–296 (KTKEDILESKSEQTKSKQRDTQERKREEKR) are compositionally biased toward basic and acidic residues. Positions 273–313 (LESKSEQTKSKQRDTQERKREEKRKANRRKSKRMSKYKENK) form a coiled coil. Over residues 297 to 307 (KANRRKSKRMS) the composition is skewed to basic residues. Positions 308–318 (KYKENKSENKK) are enriched in basic and acidic residues. The KEN box motif lies at 310-312 (KEN). Residues 364–375 (SEVSLCESSGSG) are compositionally biased toward low complexity. A compositionally biased stretch (polar residues) spans 388-398 (YIQNPTSNSDR). Over residues 410 to 421 (KYTDEKETEGSK) the composition is skewed to basic and acidic residues. A compositionally biased stretch (low complexity) spans 422-433 (PTKTPTTTPPET). Serine 436 carries the post-translational modification Phosphoserine. The D-box 2 motif lies at 438 to 446 (HLSLKDITN). The PXVXL/I motif signature appears at 451-455 (PVVKI). The D-box 3 motif lies at 457–465 (RLSLSPKKN). Serine 507 carries the post-translational modification Phosphoserine; by NEK2.

This sequence belongs to the shugoshin family. Interacts with PPP2CA (or PPP2CB), PPP2R1B, PPP2R5A, PPP2R5B, PPP2R5C, PPP2R5D, PPP2R5E, SET, LRRC59, RBM10 (or RBM5), RPL10A, RPL28, RPL7, RPL7A and RPLP1. Interaction with protein phosphatase 2A occurs most probably through direct binding to the regulatory B56 subunits: PPP2R1B, PPP2R5A, PPP2R5B, PPP2R5C, PPP2R5D, PPP2R5E. Interacts with PPP2R1A and NEK2. Isoform 3 interacts with PLK1. Interacts with CDCA8. In terms of processing, ubiquitinated and degraded during mitotic exit by APC/C-Cdh1. Phosphorylation by NEK2 is essential for chromosome congression in mitosis and for the proper attachment of spindle microtubule to the kinetochore. Phosphorylated by PLK1 and AUKRB. Widely expressed. Highly expressed in testis. Expressed in lung, small intestine, breast, liver and placenta. Strongly overexpressed in 90% of breast cancers tested.

It is found in the nucleus. It localises to the chromosome. Its subcellular location is the centromere. The protein resides in the kinetochore. The protein localises to the cytoplasm. It is found in the cytoskeleton. It localises to the spindle pole. Its subcellular location is the microtubule organizing center. The protein resides in the centrosome. The protein localises to the nucleus speckle. Functionally, plays a central role in chromosome cohesion during mitosis by preventing premature dissociation of cohesin complex from centromeres after prophase, when most of cohesin complex dissociates from chromosomes arms. May act by preventing phosphorylation of the STAG2 subunit of cohesin complex at the centromere, ensuring cohesin persistence at centromere until cohesin cleavage by ESPL1/separase at anaphase. Essential for proper chromosome segregation during mitosis and this function requires interaction with PPP2R1A. Its phosphorylated form is necessary for chromosome congression and for the proper attachment of spindle microtubule to the kinetochore. Necessary for kinetochore localization of PLK1 and CENPF. May play a role in the tension sensing mechanism of the spindle-assembly checkpoint by regulating PLK1 kinetochore affinity. Isoform 3 plays a role in maintaining centriole cohesion involved in controlling spindle pole integrity. Involved in centromeric enrichment of AUKRB in prometaphase. In Homo sapiens (Human), this protein is Shugoshin 1.